Reading from the N-terminus, the 218-residue chain is UPF0126 membrane protein SCO4104 (218 aa).

Transmembrane regions (helical) follow at residues 8 to 28, 37 to 57, 64 to 84, 91 to 111, 118 to 138, 154 to 174, and 179 to 199; these read LLALDLTGTFAFGLNGALTAV, GVVVLGMITALGGGVIRDVLI, AFLDWRYYTLAAAGGLLAFAV, LEPAITVLDAVGLSTFAVIGA, GLAVVPAMLLGVITAVGGGTI, LYAIPALAGAAVTVATTETGV, and AALGAAAVCFLIRMLGLHFGI.

Belongs to the UPF0126 family.

Its subcellular location is the cell membrane. This is UPF0126 membrane protein SCO4104 from Streptomyces coelicolor (strain ATCC BAA-471 / A3(2) / M145).